The sequence spans 278 residues: tRNA pseudouridine synthase A (278 aa).

The active-site Nucleophile is the D52. Residue Y110 participates in substrate binding. The tract at residues 259–278 is disordered; it reads SKRQNGTTKVEQPSSYVHEE. The segment covering 261 to 278 has biased composition (polar residues); it reads RQNGTTKVEQPSSYVHEE.

Belongs to the tRNA pseudouridine synthase TruA family. Homodimer.

The catalysed reaction is uridine(38/39/40) in tRNA = pseudouridine(38/39/40) in tRNA. Formation of pseudouridine at positions 38, 39 and 40 in the anticodon stem and loop of transfer RNAs. The polypeptide is tRNA pseudouridine synthase A (Chloroflexus aurantiacus (strain ATCC 29366 / DSM 635 / J-10-fl)).